The chain runs to 455 residues: Probable glycine dehydrogenase (decarboxylating) subunit 1 (455 aa).

This sequence belongs to the GcvP family. N-terminal subunit subfamily. In terms of assembly, the glycine cleavage system is composed of four proteins: P, T, L and H. In this organism, the P 'protein' is a heterodimer of two subunits.

The enzyme catalyses N(6)-[(R)-lipoyl]-L-lysyl-[glycine-cleavage complex H protein] + glycine + H(+) = N(6)-[(R)-S(8)-aminomethyldihydrolipoyl]-L-lysyl-[glycine-cleavage complex H protein] + CO2. Its function is as follows. The glycine cleavage system catalyzes the degradation of glycine. The P protein binds the alpha-amino group of glycine through its pyridoxal phosphate cofactor; CO(2) is released and the remaining methylamine moiety is then transferred to the lipoamide cofactor of the H protein. The chain is Probable glycine dehydrogenase (decarboxylating) subunit 1 from Francisella philomiragia subsp. philomiragia (strain ATCC 25017 / CCUG 19701 / FSC 153 / O#319-036).